The chain runs to 1346 residues: Zinc finger protein 541 (1346 aa).

Disordered stretches follow at residues 1 to 34 (MDQYSLGDEGALPSEMHLPSFSESQGLNCSDTLN) and 113 to 136 (EADEGGRATSGSARKGKRQHSSPQ). Polar residues predominate over residues 21–32 (FSESQGLNCSDT). 3 C2H2-type zinc fingers span residues 140 to 162 (LDCSLCGKVFSSASSLSKHYLTH), 168 to 190 (HVCKICSKAFKRQDHLTGHMLTH), and 196 to 220 (FVCIEQGCSKSYCDYRSLRRHYEVH). Disordered regions lie at residues 235-271 (ACGDSPHAHESAGQPPPSSLRSLVPPEARSPGSLLPH), 283-328 (VHQK…AAPA), 437-472 (SAVPSREGSESGPGPSSGSPSEESPPGPGGGLEDAL), and 578-744 (SQLP…GGYR). Composition is skewed to low complexity over residues 294–323 (PAGASDSEGRNTACPCPASSGSSSCTPAGP) and 440–458 (PSREGSESGPGPSSGSPSE). Positions 671 to 685 (PDISSLAKQLRSSKG) are enriched in polar residues. A C2H2-type 4 zinc finger spans residues 838 to 860 (FVCKNCSQMFYTEKGLSSHMCFH). Residues 931–971 (AMGQEKDGEERDSKESSQQRKRKKRPPPSTAGEPGPAGCHQ) are disordered. A compositionally biased stretch (basic and acidic residues) spans 934 to 948 (QEKDGEERDSKESSQ). The 93-residue stretch at 1053–1145 (PHINIGSRFQ…VALETLLLRG (93 aa)) folds into the ELM2 domain. The region spanning 1160–1211 (TGSDVWTPIEKRLFKKAFYAHKKDFYLIHKMIQTKTVAQCVEYYYIWKKMIK) is the SANT domain. The tract at residues 1224–1281 (VKREPEEVERTEEKVPCSPRERPSHHPTPKLKTKSYRRESILSSSPNAGSKRTPELLG) is disordered. Over residues 1234-1247 (TEEKVPCSPRERPS) the composition is skewed to basic and acidic residues. Positions 1248–1258 (HHPTPKLKTKS) are enriched in basic residues. Positions 1264–1273 (ILSSSPNAGS) are enriched in polar residues. The C2H2-type 5 zinc-finger motif lies at 1289-1311 (FPCRECERVFDKIKSRNAHMKRH).

In terms of assembly, interacts with DNTTIP1. Identified in a complex with KCDT19, HDAC1 and HSPA2. Component of a histone deacetylase complex containing DNTTIP1, ZNF541, HDAC1 and HDAC2. Identified in a complex with HDAC1, HDAC2, DNTTIP1 and KCTD19.

The protein resides in the nucleus. Its function is as follows. Transcription regulator which is essential for male fertility and for the completion of meiotic prophase in spermatocytes. Regulates progression of the pachytene stage of meiotic prophase by activating the expression of genes involved in meiosis during spermatogenesis. Maintains the repression of pre-pachytene transcriptional programs, including meiotic double-strand breaks (DSB) formation genes in pachytene spermatocytes and suppresses aberrant DSB formation after mid-pachytene, thus ensuring meiosis progression. This Homo sapiens (Human) protein is Zinc finger protein 541 (ZNF541).